The chain runs to 281 residues: Probable endonuclease 4 (281 aa).

Residues His-67, His-107, Glu-144, Asp-178, His-181, His-215, Asp-228, His-230, and Glu-260 each contribute to the Zn(2+) site.

This sequence belongs to the AP endonuclease 2 family. The cofactor is Zn(2+).

It catalyses the reaction Endonucleolytic cleavage to 5'-phosphooligonucleotide end-products.. Its function is as follows. Endonuclease IV plays a role in DNA repair. It cleaves phosphodiester bonds at apurinic or apyrimidinic (AP) sites, generating a 3'-hydroxyl group and a 5'-terminal sugar phosphate. This is Probable endonuclease 4 from Methanocorpusculum labreanum (strain ATCC 43576 / DSM 4855 / Z).